The following is a 45-amino-acid chain: GHVPCGKDGRKCGYHADCCNCCLSGICKPSTSWTGCSTSTFLLTR.

Intrachain disulfides connect Cys5-Cys19, Cys12-Cys22, Cys18-Cys27, and Cys21-Cys36. At Leu43 the chain carries D-leucine. A propeptide (removed by a carboxypeptidase) is located at residue Arg45.

The protein belongs to the conotoxin I1 superfamily. Expressed by the venom duct.

The protein resides in the secreted. Its function is as follows. Iota-conotoxins bind to voltage-gated sodium channels (Nav) and act as agonists by shifting the voltage-dependence of activation to more hyperpolarized levels. Produces general excitatory symptoms. This chain is Iota-conotoxin-like R11.13, found in Conus radiatus (Rayed cone).